We begin with the raw amino-acid sequence, 216 residues long: Elongation factor Ts (216 aa).

An involved in Mg(2+) ion dislocation from EF-Tu region spans residues 81-84 (TDFV).

Belongs to the EF-Ts family.

It is found in the cytoplasm. Its function is as follows. Associates with the EF-Tu.GDP complex and induces the exchange of GDP to GTP. It remains bound to the aminoacyl-tRNA.EF-Tu.GTP complex up to the GTP hydrolysis stage on the ribosome. In Geobacter sp. (strain M21), this protein is Elongation factor Ts.